The primary structure comprises 153 residues: Lipoprotein signal peptidase (153 aa).

2 helical membrane-spanning segments follow: residues 52-72 (ILAGQMWFFYVITIAVIIGIV) and 81-101 (GQMLLGISLGLMLGGAAGNFI). Active-site residues include Asp111 and Asp129. Residues 124–144 (IFNIADSSLCVGVILLFIHML) traverse the membrane as a helical segment.

It belongs to the peptidase A8 family.

The protein resides in the cell membrane. The catalysed reaction is Release of signal peptides from bacterial membrane prolipoproteins. Hydrolyzes -Xaa-Yaa-Zaa-|-(S,diacylglyceryl)Cys-, in which Xaa is hydrophobic (preferably Leu), and Yaa (Ala or Ser) and Zaa (Gly or Ala) have small, neutral side chains.. The protein operates within protein modification; lipoprotein biosynthesis (signal peptide cleavage). Its function is as follows. This protein specifically catalyzes the removal of signal peptides from prolipoproteins. The sequence is that of Lipoprotein signal peptidase from Bacillus velezensis (strain DSM 23117 / BGSC 10A6 / LMG 26770 / FZB42) (Bacillus amyloliquefaciens subsp. plantarum).